Reading from the N-terminus, the 130-residue chain is MAQVQYYGTGRRKSSVARVRLVPGEGRIVVNNREISEHIPSPALIEDIKQPLTLTETAGTYDVLVNVHGGGLSGQAGAIRHGIARALLEADPEYRATLKRAGLLTRDARMKERKKYGLKGARRAPQFSKR.

This sequence belongs to the universal ribosomal protein uS9 family.

This is Small ribosomal subunit protein uS9 from Bacillus velezensis (strain DSM 23117 / BGSC 10A6 / LMG 26770 / FZB42) (Bacillus amyloliquefaciens subsp. plantarum).